The following is a 449-amino-acid chain: Pentalenene oxygenase (449 aa).

Residues 251-273 (VITVMAAGTETVAGTLTWIFHLL) traverse the membrane as a helical segment. A heme-binding site is contributed by cysteine 393.

This sequence belongs to the cytochrome P450 family.

Its subcellular location is the membrane. It catalyses the reaction pentalenene + 4 reduced [2Fe-2S]-[ferredoxin] + 2 O2 + 4 H(+) = pentalen-13-al + 4 oxidized [2Fe-2S]-[ferredoxin] + 3 H2O. It functions in the pathway antibiotic biosynthesis; neopentalenolactone biosynthesis. Functionally, catalyzes the conversion of pentalenene to pentalen-13-al by stepwise oxidation via pentalen-13-ol, a precursor of neopentalenolactone antibiotic. The polypeptide is Pentalenene oxygenase (ptlI) (Streptomyces avermitilis (strain ATCC 31267 / DSM 46492 / JCM 5070 / NBRC 14893 / NCIMB 12804 / NRRL 8165 / MA-4680)).